The chain runs to 519 residues: Cytochrome P450 52A12 (519 aa).

C467 is a heme binding site.

Belongs to the cytochrome P450 family. Heme is required as a cofactor.

Its subcellular location is the membrane. Together with an NADPH cytochrome P450 the enzyme system catalyzes the terminal hydroxylation as the first step in the assimilation of alkanes and fatty acids. The sequence is that of Cytochrome P450 52A12 (CYP52A12) from Debaryomyces hansenii (Yeast).